A 484-amino-acid chain; its full sequence is Synaptic vesicle membrane protein VAT-1 homolog (484 aa).

2 stretches are compositionally biased toward low complexity: residues 1 to 13 and 40 to 61; these read MSGE…QQNA and SAST…PAAE. 2 disordered regions span residues 1–65 and 402–484; these read MSGE…KAPE and IGKI…KEEN. Over residues 411 to 484 the composition is skewed to basic and acidic residues; it reads PMKEEEKKEE…KKEEVKKEEN (74 aa).

The protein belongs to the zinc-containing alcohol dehydrogenase family. Quinone oxidoreductase subfamily.

The polypeptide is Synaptic vesicle membrane protein VAT-1 homolog (Danio rerio (Zebrafish)).